The following is a 117-amino-acid chain: MDIIKGIDAAQLKKDIIDFNTGDTIKVHVRIKEGTRERIQVFEGIVIKRQGGGIAETFTVRRISYGVGVERTFPVHSPKIEKIEIVKHGKVRRARIFYLRDRIGKAAFKIKERKNFK.

It belongs to the bacterial ribosomal protein bL19 family.

Its function is as follows. This protein is located at the 30S-50S ribosomal subunit interface and may play a role in the structure and function of the aminoacyl-tRNA binding site. This Alkaliphilus metalliredigens (strain QYMF) protein is Large ribosomal subunit protein bL19.